The chain runs to 265 residues: Mycothiol acetyltransferase (265 aa).

N-acetyltransferase domains lie at 1-110 and 118-265; these read MDDL…PPLP and VSVR…YVRG. Asp3 is a binding site for 1D-myo-inositol 2-(L-cysteinylamino)-2-deoxy-alpha-D-glucopyranoside. 44-46 is a binding site for acetyl-CoA; the sequence is VQV. Glu145, Arg185, and Glu198 together coordinate 1D-myo-inositol 2-(L-cysteinylamino)-2-deoxy-alpha-D-glucopyranoside. Acetyl-CoA is bound by residues 202–204 and 209–215; these read LGV and HCKGLGK. Tyr236 serves as a coordination point for 1D-myo-inositol 2-(L-cysteinylamino)-2-deoxy-alpha-D-glucopyranoside.

The protein belongs to the acetyltransferase family. MshD subfamily. Monomer.

It carries out the reaction 1D-myo-inositol 2-(L-cysteinylamino)-2-deoxy-alpha-D-glucopyranoside + acetyl-CoA = mycothiol + CoA + H(+). Functionally, catalyzes the transfer of acetyl from acetyl-CoA to desacetylmycothiol (Cys-GlcN-Ins) to form mycothiol. This Segniliparus rotundus (strain ATCC BAA-972 / CDC 1076 / CIP 108378 / DSM 44985 / JCM 13578) protein is Mycothiol acetyltransferase.